We begin with the raw amino-acid sequence, 377 residues long: Sodium-dependent organic anion transporter (377 aa).

At 1 to 29 (MRANCSSGLACPANSSEEELPEGLKAFGN) the chain is on the extracellular side. An N-linked (GlcNAc...) asparagine glycan is attached at Asn4. The helical transmembrane segment at 30 to 50 (LDLVFTVVSALMIGLLMFSLG) threads the bilayer. The Cytoplasmic portion of the chain corresponds to 51–67 (CSVEVQKLWGHIRRPWG). The helical transmembrane segment at 68-88 (IAVGMLCQFGLMPLIAYLLII) threads the bilayer. The Extracellular portion of the chain corresponds to 89-97 (SFSLKPLQA). The chain crosses the membrane as a helical span at residues 98–118 (IAVLIMGCCPGGTVSNIFTFW). Topologically, residues 119–133 (VDGDMDLSISMTTCS) are cytoplasmic. A helical membrane pass occupies residues 134–154 (TMAALGMMPLCLYLYTLSWNL). Residues 155–159 (EQNLT) are Extracellular-facing. An N-linked (GlcNAc...) asparagine glycan is attached at Asn157. Residues 160–180 (IPYQNIGITLVCLIIPVAFGI) traverse the membrane as a helical segment. The Cytoplasmic portion of the chain corresponds to 181–195 (YVNYRWPKQSKIILK). A helical transmembrane segment spans residues 196–216 (IGAIAGGLLFLVVTGAGMVLM). The Extracellular segment spans residues 217–223 (KEFWSSD). The chain crosses the membrane as a helical span at residues 224–244 (IILLMISFIFPLIGHATGFLL). Residues 245 to 257 (ALLTHQSWQRCRT) lie on the Cytoplasmic side of the membrane. A helical membrane pass occupies residues 258–278 (ISLETGTQNVQMCFTMLQLSF). The Extracellular segment spans residues 279 to 285 (TAEQLVQ). Residues 286 to 306 (IFGFVLAYGLFQMLNGFFMVA) traverse the membrane as a helical segment. Residues 307 to 377 (AYKMYKRRLK…TPTGDIARAK (71 aa)) are Cytoplasmic-facing. Residues 319-377 (HGNEKPSCQEARHRKKSTSPKETTAFLEVNEEATLSPGPSGPVDPHGAPTPTGDIARAK) are disordered.

The protein belongs to the bile acid:sodium symporter (BASS) (TC 2.A.28) family. Glycosylated.

The protein localises to the membrane. The catalysed reaction is estrone 3-sulfate(out) + 2 Na(+)(out) = estrone 3-sulfate(in) + 2 Na(+)(in). The enzyme catalyses 17beta-estradiol 3-sulfate(out) + 2 Na(+)(out) = 17beta-estradiol 3-sulfate(in) + 2 Na(+)(in). It catalyses the reaction dehydroepiandrosterone 3-sulfate(out) + 2 Na(+)(out) = dehydroepiandrosterone 3-sulfate(in) + 2 Na(+)(in). It carries out the reaction androst-5-ene-diol 3-sulfate(out) + 2 Na(+)(out) = androst-5-ene-diol 3-sulfate(in) + 2 Na(+)(in). The catalysed reaction is pregnenolone sulfate(out) + 2 Na(+)(out) = pregnenolone sulfate(in) + 2 Na(+)(in). The enzyme catalyses taurolithocholate 3-sulfate(out) + 2 Na(+)(out) = taurolithocholate 3-sulfate(in) + 2 Na(+)(in). It catalyses the reaction androsterone 3alpha-sulfate(out) + 2 Na(+)(out) = androsterone 3alpha-sulfate(in) + 2 Na(+)(in). It carries out the reaction 5alpha-dihydrotestosterone sulfate(out) + 2 Na(+)(out) = 5alpha-dihydrotestosterone sulfate(in) + 2 Na(+)(in). The catalysed reaction is 17beta-estradiol 17-sulfate(out) + 2 Na(+)(out) = 17beta-estradiol 17-sulfate(in) + 2 Na(+)(in). The enzyme catalyses 17alpha-hydroxypregnenolone 3-sulfate(out) + 2 Na(+)(out) = 17alpha-hydroxypregnenolone 3-sulfate(in) + 2 Na(+)(in). It catalyses the reaction epiandrosterone 3-sulfate(out) + 2 Na(+)(out) = epiandrosterone 3-sulfate(in) + 2 Na(+)(in). It carries out the reaction epitestosterone 17-sulfate(out) + 2 Na(+)(out) = epitestosterone 17-sulfate(in) + 2 Na(+)(in). The catalysed reaction is testosterone 17-sulfate(out) + 2 Na(+)(out) = testosterone 17-sulfate(in) + 2 Na(+)(in). The enzyme catalyses 16alpha-hydroxydehydroepiandrosterone 3-sulfate(out) + 2 Na(+)(out) = 16alpha-hydroxydehydroepiandrosterone 3-sulfate(in) + 2 Na(+)(in). Functionally, transports sulfoconjugated steroid hormones from the extracellular compartment into the cytosol in a sodium-dependent manner without hydrolysis. Steroid sulfate hormones are commonly considered to be biologically inactive metabolites, that may be activated by steroid sulfatases into free steroids. May play an important role by delivering sulfoconjugated steroids to specific target cells in reproductive organs. May play a role transporting the estriol precursor 16alpha-hydroxydehydroepiandrosterone 3-sulfate (16a-OH-DHEAS) at the fetal blood vessel endothelium. Can also transport other sulfoconjugated molecules such as taurolithocholic acid-3-sulfate and sulfoconjugated pyrenes. The sequence is that of Sodium-dependent organic anion transporter (SLC10A6) from Bos taurus (Bovine).